Consider the following 103-residue polypeptide: Small ribosomal subunit protein uS10 (103 aa).

It belongs to the universal ribosomal protein uS10 family. In terms of assembly, part of the 30S ribosomal subunit.

Its function is as follows. Involved in the binding of tRNA to the ribosomes. The chain is Small ribosomal subunit protein uS10 from Dechloromonas aromatica (strain RCB).